The sequence spans 599 residues: 2-succinyl-5-enolpyruvyl-6-hydroxy-3-cyclohexene-1-carboxylate synthase (599 aa).

A compositionally biased stretch (low complexity) spans 1-21 (MTSENPLDPNNAYAAADDAPL). The disordered stretch occupies residues 1 to 35 (MTSENPLDPNNAYAAADDAPLSEGDPTGAPADSGS).

The protein belongs to the TPP enzyme family. MenD subfamily. As to quaternary structure, homodimer. Requires Mg(2+) as cofactor. Mn(2+) is required as a cofactor. The cofactor is thiamine diphosphate.

The enzyme catalyses isochorismate + 2-oxoglutarate + H(+) = 5-enolpyruvoyl-6-hydroxy-2-succinyl-cyclohex-3-ene-1-carboxylate + CO2. The protein operates within quinol/quinone metabolism; 1,4-dihydroxy-2-naphthoate biosynthesis; 1,4-dihydroxy-2-naphthoate from chorismate: step 2/7. It functions in the pathway quinol/quinone metabolism; menaquinone biosynthesis. Its function is as follows. Catalyzes the thiamine diphosphate-dependent decarboxylation of 2-oxoglutarate and the subsequent addition of the resulting succinic semialdehyde-thiamine pyrophosphate anion to isochorismate to yield 2-succinyl-5-enolpyruvyl-6-hydroxy-3-cyclohexene-1-carboxylate (SEPHCHC). The chain is 2-succinyl-5-enolpyruvyl-6-hydroxy-3-cyclohexene-1-carboxylate synthase from Arthrobacter sp. (strain FB24).